The sequence spans 273 residues: Large ribosomal subunit protein uL2 (273 aa).

Positions 221–273 are disordered; that stretch reads RGTAMNPVDHPHGGGEGRNFGKHPVSPWGVQTKGKKTRHNKRTDKYIVRRRGK. Residues 253–273 are compositionally biased toward basic residues; sequence KGKKTRHNKRTDKYIVRRRGK.

The protein belongs to the universal ribosomal protein uL2 family. In terms of assembly, part of the 50S ribosomal subunit. Forms a bridge to the 30S subunit in the 70S ribosome.

Functionally, one of the primary rRNA binding proteins. Required for association of the 30S and 50S subunits to form the 70S ribosome, for tRNA binding and peptide bond formation. It has been suggested to have peptidyltransferase activity; this is somewhat controversial. Makes several contacts with the 16S rRNA in the 70S ribosome. The chain is Large ribosomal subunit protein uL2 from Mannheimia succiniciproducens (strain KCTC 0769BP / MBEL55E).